The sequence spans 680 residues: UvrABC system protein B (680 aa).

Residues 27-192 form the Helicase ATP-binding domain; that stretch reads SNIEAGVTDQ…ERNDYDFHRG (166 aa). 40-47 lines the ATP pocket; the sequence is GVTGSGKT. The Beta-hairpin motif lies at 93-116; sequence YYDYYQPEAYVPSSDTYIEKDSSI. The Helicase C-terminal domain occupies 432–594; it reads QVDDLLGECR…IVPATIRKAV (163 aa). Residues 637 to 672 enclose the UVR domain; sequence AKQIQQLERDMREAAKELEFERAAELRDRIRLLREH.

This sequence belongs to the UvrB family. In terms of assembly, forms a heterotetramer with UvrA during the search for lesions. Interacts with UvrC in an incision complex.

Its subcellular location is the cytoplasm. In terms of biological role, the UvrABC repair system catalyzes the recognition and processing of DNA lesions. A damage recognition complex composed of 2 UvrA and 2 UvrB subunits scans DNA for abnormalities. Upon binding of the UvrA(2)B(2) complex to a putative damaged site, the DNA wraps around one UvrB monomer. DNA wrap is dependent on ATP binding by UvrB and probably causes local melting of the DNA helix, facilitating insertion of UvrB beta-hairpin between the DNA strands. Then UvrB probes one DNA strand for the presence of a lesion. If a lesion is found the UvrA subunits dissociate and the UvrB-DNA preincision complex is formed. This complex is subsequently bound by UvrC and the second UvrB is released. If no lesion is found, the DNA wraps around the other UvrB subunit that will check the other stand for damage. The chain is UvrABC system protein B from Nitratidesulfovibrio vulgaris (strain DSM 19637 / Miyazaki F) (Desulfovibrio vulgaris).